Reading from the N-terminus, the 322-residue chain is Ribonucleoside-diphosphate reductase subunit beta nrdF1 (322 aa).

Residues aspartate 70, glutamate 101, and histidine 104 each coordinate Fe cation. Tyrosine 108 is an active-site residue. Residues glutamate 161, glutamate 195, and histidine 198 each coordinate Fe cation.

The protein belongs to the ribonucleoside diphosphate reductase small chain family. In terms of assembly, tetramer of two alpha and two beta subunits. Requires Fe cation as cofactor.

It carries out the reaction a 2'-deoxyribonucleoside 5'-diphosphate + [thioredoxin]-disulfide + H2O = a ribonucleoside 5'-diphosphate + [thioredoxin]-dithiol. Functionally, provides the precursors necessary for DNA synthesis. Catalyzes the biosynthesis of deoxyribonucleotides from the corresponding ribonucleotides. The chain is Ribonucleoside-diphosphate reductase subunit beta nrdF1 (nrdF1) from Mycobacterium tuberculosis (strain CDC 1551 / Oshkosh).